Here is a 401-residue protein sequence, read N- to C-terminus: UDP-N-acetylglucosamine--N-acetylmuramyl-(pentapeptide) pyrophosphoryl-undecaprenol N-acetylglucosamine transferase (401 aa).

The disordered stretch occupies residues 1–24 (MTRISVPAGQERNDGGISVPAGQE). UDP-N-acetyl-alpha-D-glucosamine is bound by residues 39–41 (TAG), asparagine 157, arginine 194, serine 228, and glutamine 324.

The protein belongs to the glycosyltransferase 28 family. MurG subfamily.

It is found in the cell membrane. The catalysed reaction is di-trans,octa-cis-undecaprenyl diphospho-N-acetyl-alpha-D-muramoyl-L-alanyl-D-glutamyl-meso-2,6-diaminopimeloyl-D-alanyl-D-alanine + UDP-N-acetyl-alpha-D-glucosamine = di-trans,octa-cis-undecaprenyl diphospho-[N-acetyl-alpha-D-glucosaminyl-(1-&gt;4)]-N-acetyl-alpha-D-muramoyl-L-alanyl-D-glutamyl-meso-2,6-diaminopimeloyl-D-alanyl-D-alanine + UDP + H(+). It participates in cell wall biogenesis; peptidoglycan biosynthesis. Cell wall formation. Catalyzes the transfer of a GlcNAc subunit on undecaprenyl-pyrophosphoryl-MurNAc-pentapeptide (lipid intermediate I) to form undecaprenyl-pyrophosphoryl-MurNAc-(pentapeptide)GlcNAc (lipid intermediate II). This is UDP-N-acetylglucosamine--N-acetylmuramyl-(pentapeptide) pyrophosphoryl-undecaprenol N-acetylglucosamine transferase from Mycolicibacterium vanbaalenii (strain DSM 7251 / JCM 13017 / BCRC 16820 / KCTC 9966 / NRRL B-24157 / PYR-1) (Mycobacterium vanbaalenii).